We begin with the raw amino-acid sequence, 210 residues long: Thiamine-phosphate synthase (210 aa).

4-amino-2-methyl-5-(diphosphooxymethyl)pyrimidine contacts are provided by residues 36 to 40 (QLRIK) and Asn68. Mg(2+)-binding residues include Asp69 and Asp88. 4-amino-2-methyl-5-(diphosphooxymethyl)pyrimidine is bound at residue Ser107. 133 to 135 (TQT) contributes to the 2-[(2R,5Z)-2-carboxy-4-methylthiazol-5(2H)-ylidene]ethyl phosphate binding site. Lys136 is a binding site for 4-amino-2-methyl-5-(diphosphooxymethyl)pyrimidine. 2-[(2R,5Z)-2-carboxy-4-methylthiazol-5(2H)-ylidene]ethyl phosphate-binding positions include Gly165 and 185–186 (VS).

This sequence belongs to the thiamine-phosphate synthase family. Requires Mg(2+) as cofactor.

The catalysed reaction is 2-[(2R,5Z)-2-carboxy-4-methylthiazol-5(2H)-ylidene]ethyl phosphate + 4-amino-2-methyl-5-(diphosphooxymethyl)pyrimidine + 2 H(+) = thiamine phosphate + CO2 + diphosphate. It catalyses the reaction 2-(2-carboxy-4-methylthiazol-5-yl)ethyl phosphate + 4-amino-2-methyl-5-(diphosphooxymethyl)pyrimidine + 2 H(+) = thiamine phosphate + CO2 + diphosphate. It carries out the reaction 4-methyl-5-(2-phosphooxyethyl)-thiazole + 4-amino-2-methyl-5-(diphosphooxymethyl)pyrimidine + H(+) = thiamine phosphate + diphosphate. The protein operates within cofactor biosynthesis; thiamine diphosphate biosynthesis; thiamine phosphate from 4-amino-2-methyl-5-diphosphomethylpyrimidine and 4-methyl-5-(2-phosphoethyl)-thiazole: step 1/1. In terms of biological role, condenses 4-methyl-5-(beta-hydroxyethyl)thiazole monophosphate (THZ-P) and 2-methyl-4-amino-5-hydroxymethyl pyrimidine pyrophosphate (HMP-PP) to form thiamine monophosphate (TMP). This Cronobacter sakazakii (strain ATCC BAA-894) (Enterobacter sakazakii) protein is Thiamine-phosphate synthase.